A 220-amino-acid chain; its full sequence is Cytidylate kinase (220 aa).

An ATP-binding site is contributed by 9–17; sequence GPAASGKST.

It belongs to the cytidylate kinase family. Type 1 subfamily.

It localises to the cytoplasm. It catalyses the reaction CMP + ATP = CDP + ADP. It carries out the reaction dCMP + ATP = dCDP + ADP. The chain is Cytidylate kinase from Thermotoga petrophila (strain ATCC BAA-488 / DSM 13995 / JCM 10881 / RKU-1).